The primary structure comprises 670 residues: DNA ligase (670 aa).

Residues 34-38 (DFEFD), 83-84 (SL), and glutamate 113 contribute to the NAD(+) site. Lysine 115 serves as the catalytic N6-AMP-lysine intermediate. Residues arginine 136, glutamate 173, lysine 288, and lysine 312 each contribute to the NAD(+) site. Cysteine 406, cysteine 409, cysteine 424, and cysteine 430 together coordinate Zn(2+). The 80-residue stretch at 591-670 (PESDKFAGKS…EAEFISLLNS (80 aa)) folds into the BRCT domain.

Belongs to the NAD-dependent DNA ligase family. LigA subfamily. Mg(2+) is required as a cofactor. Mn(2+) serves as cofactor.

The catalysed reaction is NAD(+) + (deoxyribonucleotide)n-3'-hydroxyl + 5'-phospho-(deoxyribonucleotide)m = (deoxyribonucleotide)n+m + AMP + beta-nicotinamide D-nucleotide.. In terms of biological role, DNA ligase that catalyzes the formation of phosphodiester linkages between 5'-phosphoryl and 3'-hydroxyl groups in double-stranded DNA using NAD as a coenzyme and as the energy source for the reaction. It is essential for DNA replication and repair of damaged DNA. This is DNA ligase from Cytophaga hutchinsonii (strain ATCC 33406 / DSM 1761 / CIP 103989 / NBRC 15051 / NCIMB 9469 / D465).